Consider the following 59-residue polypeptide: Large ribosomal subunit protein bL32 (59 aa).

This sequence belongs to the bacterial ribosomal protein bL32 family.

This is Large ribosomal subunit protein bL32 from Mesoplasma florum (strain ATCC 33453 / NBRC 100688 / NCTC 11704 / L1) (Acholeplasma florum).